Reading from the N-terminus, the 500-residue chain is Cytochrome P450 11B1, mitochondrial (500 aa).

The transit peptide at 1-24 directs the protein to the mitochondrion; it reads MAFRLKSDVRLAGSWLCLRGARAL. Cys-447 contributes to the heme binding site.

The protein belongs to the cytochrome P450 family. Heme serves as cofactor.

It localises to the mitochondrion inner membrane. The enzyme catalyses a steroid + 2 reduced [adrenodoxin] + O2 + 2 H(+) = an 11beta-hydroxysteroid + 2 oxidized [adrenodoxin] + H2O. It catalyses the reaction 11-deoxycortisol + 2 reduced [adrenodoxin] + O2 + 2 H(+) = cortisol + 2 oxidized [adrenodoxin] + H2O. It carries out the reaction 21-hydroxyprogesterone + 2 reduced [adrenodoxin] + O2 + 2 H(+) = corticosterone + 2 oxidized [adrenodoxin] + H2O. The catalysed reaction is 21-hydroxyprogesterone + 2 reduced [adrenodoxin] + O2 + 2 H(+) = 18-hydroxy-11-deoxycorticosterone + 2 oxidized [adrenodoxin] + H2O. The enzyme catalyses 21-hydroxyprogesterone + 2 reduced [adrenodoxin] + O2 + 2 H(+) = 19-hydroxy-11-deoxycorticosterone + 2 oxidized [adrenodoxin] + H2O. It catalyses the reaction cortisol + 2 reduced [adrenodoxin] + O2 + 2 H(+) = 18-hydroxycortisol + 2 oxidized [adrenodoxin] + H2O. It carries out the reaction 11-deoxycortisol + 2 reduced [adrenodoxin] + O2 + 2 H(+) = 18-hydroxy-11-deoxycortisol + 2 oxidized [adrenodoxin] + H2O. The protein operates within steroid biosynthesis; glucocorticoid biosynthesis. Its pathway is steroid hormone biosynthesis. Its function is as follows. A cytochrome P450 monooxygenase involved in the biosynthesis of adrenal corticoids. Catalyzes a variety of reactions that are essential for many species, including detoxification, defense, and the formation of endogenous chemicals like steroid hormones. Steroid 11beta, 18- and 19-hydroxylase with preferred regioselectivity at 11beta, then 18, and lastly 19. Catalyzes the hydroxylation of 11-deoxycortisol and 11-deoxycorticosterone (21-hydroxyprogesterone) at 11beta position, yielding cortisol or corticosterone, respectively, but cannot produce aldosterone. Mechanistically, uses molecular oxygen inserting one oxygen atom into a substrate for hydroxylation and reducing the second into a water molecule. Two electrons are provided by NADPH via a two-protein mitochondrial transfer system comprising flavoprotein FDXR (adrenodoxin/ferredoxin reductase) and nonheme iron-sulfur protein FDX1 or FDX2 (adrenodoxin/ferredoxin). Due to its lack of 18-oxidation activity, it is incapable of generating aldosterone. Could also be involved in the androgen metabolic pathway. The chain is Cytochrome P450 11B1, mitochondrial (CYP11B1) from Cavia porcellus (Guinea pig).